Reading from the N-terminus, the 101-residue chain is Signal recognition particle 19 kDa protein (101 aa).

Belongs to the SRP19 family. As to quaternary structure, part of the signal recognition particle protein translocation system, which is composed of SRP and FtsY. Archaeal SRP consists of a 7S RNA molecule of 300 nucleotides and two protein subunits: SRP54 and SRP19.

Its subcellular location is the cytoplasm. In terms of biological role, involved in targeting and insertion of nascent membrane proteins into the cytoplasmic membrane. Binds directly to 7S RNA and mediates binding of the 54 kDa subunit of the SRP. This chain is Signal recognition particle 19 kDa protein, found in Methanosarcina barkeri (strain Fusaro / DSM 804).